A 474-amino-acid polypeptide reads, in one-letter code: Nuclear receptor ROR-alpha B (474 aa).

Positions 14 to 89 (SIPCKICGDK…VGMSRDAVKF (76 aa)) form a DNA-binding region, nuclear receptor. 2 consecutive NR C4-type zinc fingers follow at residues 17–37 (CKIC…CEGC) and 53–72 (CPRQ…CQHC). Positions 98–124 (DSLFAEVQKHRQQQQDDKTGDESEKNQ) are enriched in basic and acidic residues. The disordered stretch occupies residues 98 to 144 (DSLFAEVQKHRQQQQDDKTGDESEKNQESQAPGEAEPLTPSYALSSS). Positions 223–461 (DLEHLSENIC…TRFPPLYKEL (239 aa)) constitute an NR LBD domain. Positions 450–461 (VHTRFPPLYKEL) are AF-2.

It belongs to the nuclear hormone receptor family.

It localises to the nucleus. Functionally, nuclear receptor that binds DNA as a monomer to ROR response elements (RORE). Required for proper cerebellum development. This chain is Nuclear receptor ROR-alpha B (rorab), found in Danio rerio (Zebrafish).